A 346-amino-acid polypeptide reads, in one-letter code: Peroxidase 19 (346 aa).

A signal peptide spans Met1–Ser31. 4 disulfides stabilise this stretch: Cys51–Cys134, Cys84–Cys89, Cys140–Cys342, and Cys219–Cys251. Catalysis depends on His82, which acts as the Proton acceptor. Ca(2+) is bound by residues Asp83, Val86, Gly88, Asp90, and Ser92. Residue Pro182 participates in substrate binding. Residue Asn185 is glycosylated (N-linked (GlcNAc...) asparagine). Residue His212 coordinates heme b. Residue Thr213 coordinates Ca(2+). Ca(2+) contacts are provided by Asp265, Thr268, and Asp273.

It belongs to the peroxidase family. Classical plant (class III) peroxidase subfamily. Heme b serves as cofactor. Ca(2+) is required as a cofactor.

The protein localises to the secreted. The enzyme catalyses 2 a phenolic donor + H2O2 = 2 a phenolic radical donor + 2 H2O. In terms of biological role, removal of H(2)O(2), oxidation of toxic reductants, biosynthesis and degradation of lignin, suberization, auxin catabolism, response to environmental stresses such as wounding, pathogen attack and oxidative stress. These functions might be dependent on each isozyme/isoform in each plant tissue. In Arabidopsis thaliana (Mouse-ear cress), this protein is Peroxidase 19 (PER19).